The chain runs to 936 residues: UPF0746 protein DDB_G0280787 (936 aa).

The segment covering 1 to 19 has biased composition (basic and acidic residues); it reads MISNKRKEIDTIDGHHEKD. Positions 1–30 are disordered; the sequence is MISNKRKEIDTIDGHHEKDNDDDDSDGIDN. In terms of domain architecture, SAP spans 44–78; the sequence is SGSTNYRELQIIAKSLGLASNGKKQLVYNRIEGYF. Positions 91–110 are disordered; it reads ETNQQEEKKEEEQQQPQPQE.

The protein belongs to the UPF0746 family.

This Dictyostelium discoideum (Social amoeba) protein is UPF0746 protein DDB_G0280787.